A 213-amino-acid chain; its full sequence is Putative glutathione-dependent formaldehyde-activating enzyme (213 aa).

Positions 19–165 (FPGGTLKCLC…FRELGLETYD (147 aa)) constitute a CENP-V/GFA domain. The Zn(2+) site is built by Cys-26, Cys-28, Cys-47, Cys-49, Cys-52, Cys-94, and Cys-97.

Belongs to the Gfa family. Zn(2+) is required as a cofactor.

It carries out the reaction S-(hydroxymethyl)glutathione = glutathione + formaldehyde. Its pathway is one-carbon metabolism; formaldehyde degradation; formate from formaldehyde (glutathione route): step 1/3. Functionally, catalyzes the condensation of formaldehyde and glutathione to S-hydroxymethylglutathione. The protein is Putative glutathione-dependent formaldehyde-activating enzyme of Podospora anserina (strain S / ATCC MYA-4624 / DSM 980 / FGSC 10383) (Pleurage anserina).